The following is a 170-amino-acid chain: Ribosome maturation factor RimP (170 aa).

It belongs to the RimP family.

The protein resides in the cytoplasm. In terms of biological role, required for maturation of 30S ribosomal subunits. This is Ribosome maturation factor RimP from Chlorobaculum parvum (strain DSM 263 / NCIMB 8327) (Chlorobium vibrioforme subsp. thiosulfatophilum).